The chain runs to 297 residues: Calponin-1 (297 aa).

Residues 28-131 enclose the Calponin-homology (CH) domain; it reads HQREQELREW…STLLALASMA (104 aa). 3 Calponin-like repeats span residues 164-189, 204-229, and 243-268; these read IGLQ…RHLY, ISLQ…RQIF, and VSLQ…RQVY. Residue Thr170 is modified to Phosphothreonine; by ROCK2. Position 175 is a phosphoserine; by ROCK2 (Ser175). Thr180 and Thr184 each carry phosphothreonine; by ROCK2. Thr259 is subject to Phosphothreonine; by ROCK2.

It belongs to the calponin family. In terms of assembly, part of cGMP kinase signaling complex at least composed of ACTA2/alpha-actin, CNN1/calponin H1, PLN/phospholamban, PRKG1 and ITPR1. Smooth muscle, and tissues containing significant amounts of smooth muscle.

Functionally, thin filament-associated protein that is implicated in the regulation and modulation of smooth muscle contraction. It is capable of binding to actin, calmodulin and tropomyosin. The interaction of calponin with actin inhibits the actomyosin Mg-ATPase activity. This chain is Calponin-1 (Cnn1), found in Mus musculus (Mouse).